The chain runs to 327 residues: Glutaminase 1 (327 aa).

Substrate-binding residues include serine 74, asparagine 126, glutamate 170, asparagine 177, tyrosine 201, tyrosine 253, and valine 271.

Belongs to the glutaminase family. Homotetramer.

The enzyme catalyses L-glutamine + H2O = L-glutamate + NH4(+). The sequence is that of Glutaminase 1 (glsA1) from Bacillus subtilis (strain 168).